Consider the following 150-residue polypeptide: D-aminoacyl-tRNA deacylase (150 aa).

The Gly-cisPro motif, important for rejection of L-amino acids signature appears at 138–139; that stretch reads GP.

This sequence belongs to the DTD family. As to quaternary structure, homodimer.

The protein resides in the cytoplasm. The catalysed reaction is glycyl-tRNA(Ala) + H2O = tRNA(Ala) + glycine + H(+). It carries out the reaction a D-aminoacyl-tRNA + H2O = a tRNA + a D-alpha-amino acid + H(+). An aminoacyl-tRNA editing enzyme that deacylates mischarged D-aminoacyl-tRNAs. Also deacylates mischarged glycyl-tRNA(Ala), protecting cells against glycine mischarging by AlaRS. Acts via tRNA-based rather than protein-based catalysis; rejects L-amino acids rather than detecting D-amino acids in the active site. By recycling D-aminoacyl-tRNA to D-amino acids and free tRNA molecules, this enzyme counteracts the toxicity associated with the formation of D-aminoacyl-tRNA entities in vivo and helps enforce protein L-homochirality. This is D-aminoacyl-tRNA deacylase from Bacteroides fragilis (strain YCH46).